A 459-amino-acid polypeptide reads, in one-letter code: ATP-dependent protease ATPase subunit HslU (459 aa).

Residues Val-26, 68-73 (GVGKTE), Asp-271, Glu-337, and Arg-409 contribute to the ATP site.

The protein belongs to the ClpX chaperone family. HslU subfamily. As to quaternary structure, a double ring-shaped homohexamer of HslV is capped on each side by a ring-shaped HslU homohexamer. The assembly of the HslU/HslV complex is dependent on binding of ATP.

The protein localises to the cytoplasm. ATPase subunit of a proteasome-like degradation complex; this subunit has chaperone activity. The binding of ATP and its subsequent hydrolysis by HslU are essential for unfolding of protein substrates subsequently hydrolyzed by HslV. HslU recognizes the N-terminal part of its protein substrates and unfolds these before they are guided to HslV for hydrolysis. The protein is ATP-dependent protease ATPase subunit HslU of Xylella fastidiosa (strain M12).